The sequence spans 1488 residues: Calmodulin binding protein PICBP (1488 aa).

Disordered regions lie at residues 1-31, 63-112, 280-329, and 378-414; these read MSNPMFPEKWEESSTSKSSRRVHKRRERKMW, TAES…SRIS, GPLG…GRSS, and HDHDDGKVDGTTSDGTVGDNEEVCREGSSGELREEDG. Positions 18–31 are enriched in basic residues; it reads SSRRVHKRRERKMW. Residues 76 to 86 are compositionally biased toward basic and acidic residues; the sequence is DDSRTYSKSSD. A compositionally biased stretch (basic residues) spans 98–107; it reads SVKRRAKSKS. The span at 297–312 shows a compositional bias: acidic residues; the sequence is DNVDGDSDEEVFEEEV. Calmodulin-binding regions lie at residues 493-592 and 831-938; these read TFHM…SLIP and NSLK…DIVL. Disordered stretches follow at residues 816–844 and 941–971; these read IPDSSSDEESVSESSNSLKEEKEHQGETK and HDTPKQTKNSDTPRNNDETKEGKPRVEEGCE. Basic and acidic residues-rich tracts occupy residues 833–844 and 954–971; these read LKEEKEHQGETK and RNNDETKEGKPRVEEGCE. The interval 1135-1229 is calmodulin-binding; that stretch reads EKRVKGWNNV…SLLAQAFDTI (95 aa). 2 disordered regions span residues 1232–1252 and 1316–1340; these read QDMGSGSTPGSAASSRNISRQ and EKNQTLPEETRKEEEEEELKEDTSV. The segment covering 1235–1252 has biased composition (low complexity); it reads GSGSTPGSAASSRNISRQ. Over residues 1316–1328 the composition is skewed to basic and acidic residues; that stretch reads EKNQTLPEETRKE. Positions 1379–1483 are calmodulin-binding; it reads RQKSETLQVS…QLLVQAFESL (105 aa).

In terms of biological role, binds calmodulin in a calcium-dependent manner in vitro. May play a role in general plant defense including R gene-mediated responses. This Arabidopsis thaliana (Mouse-ear cress) protein is Calmodulin binding protein PICBP.